We begin with the raw amino-acid sequence, 2134 residues long: Genome polyprotein (2134 aa).

The Cytoplasmic segment spans residues 1–1377 (MSKLFSTVGK…WLFEKIKTSK (1377 aa)). Residues 781–882 (IVSCSGEKAK…GDYGTKEGEK (102 aa)) enclose the LRAT domain. Catalysis depends on residues His791 and His802. The active-site Acyl-thioester intermediate is the Cys863. The SF3 helicase domain occupies 1127 to 1289 (LNKLGRLDKP…EEFSTHAMLD (163 aa)). 1153–1160 (GNRGGGKS) is an ATP binding site. An intramembrane segment occupies 1378–1392 (WYILGCVGAVLSVSV). Residues 1393–2134 (LGVFAYHMIK…VKYRFIDDSF (742 aa)) lie on the Cytoplasmic side of the membrane. An O-(5'-phospho-RNA)-tyrosine modification is found at Tyr1415. A Peptidase C3 domain is found at 1431 to 1643 (DAQSVVDISN…ITKEMIEEML (213 aa)). Active-site for protease 3C activity residues include His1477, Asp1515, and Cys1603. A RdRp catalytic domain is found at 1880–2001 (DLVVGLDFSN…CIKKEYLDQK (122 aa)).

The protein belongs to the picornaviridae polyprotein family. Specific enzymatic cleavages by the viral protease in vivo yield a variety of precursors and mature proteins. During virion maturation, non-infectious particles are rendered infectious following cleavage of VP0. This maturation cleavage is followed by a conformational change of the particle. In terms of processing, VPg is uridylylated by the polymerase and is covalently linked to the 5'-end of genomic RNA. This uridylylated form acts as a nucleotide-peptide primer for the polymerase.

It is found in the virion. The protein localises to the host cytoplasm. Its subcellular location is the host cytoplasmic vesicle membrane. The enzyme catalyses RNA(n) + a ribonucleoside 5'-triphosphate = RNA(n+1) + diphosphate. The catalysed reaction is a ribonucleoside 5'-triphosphate + H2O = a ribonucleoside 5'-diphosphate + phosphate + H(+). It carries out the reaction Selective cleavage of Gln-|-Gly bond in the poliovirus polyprotein. In other picornavirus reactions Glu may be substituted for Gln, and Ser or Thr for Gly.. Functionally, capsid proteins VP1, VP2, and VP3 form a closed capsid enclosing the viral positive strand RNA genome. All these proteins contain a beta-sheet structure called beta-barrel jelly roll. Together they form an icosahedral capsid (T=3) composed of 60 copies of each VP1, VP2, and VP3, with a diameter of approximately 300 Angstroms. VP1 is situated at the 12 fivefold axes, whereas VP2 and VP3 are located at the quasi-sixfold axes. In terms of biological role, VP0 precursor is a component of immature procapsids. The N-terminal domain of VP0, protein VP4, is needed for the assembly of 12 pentamers into the icosahedral structure. Unlike other picornaviruses, AEV VP4 may not be myristoylated. Protein 2B and 2BC precursor affect membrane integrity and cause an increase in membrane permeability. Its function is as follows. Associates with and induces structural rearrangements of intracellular membranes. It displays RNA-binding, nucleotide binding and NTPase activities. Functionally, protein 3A, via its hydrophobic domain, serves as membrane anchor. In terms of biological role, protein 3B is covalently linked to the 5'-end of both the positive-strand and negative-strand genomic RNAs. It acts as a genome-linked replication primer. Cysteine protease that generates mature viral proteins from the precursor polyprotein. In addition to its proteolytic activity, it binds to viral RNA, and thus influences viral genome replication. RNA and substrate bind cooperatively to the protease. Its function is as follows. RNA-directed RNA polymerase 3D-POL replicates genomic and antigenomic RNA by recognizing replications specific signals. In Avian encephalomyelitis virus (strain Calnek vaccine) (AEV), this protein is Genome polyprotein.